We begin with the raw amino-acid sequence, 66 residues long: Large ribosomal subunit protein bL33c (66 aa).

This sequence belongs to the bacterial ribosomal protein bL33 family.

Its subcellular location is the plastid. It is found in the chloroplast. The polypeptide is Large ribosomal subunit protein bL33c (Illicium oligandrum (Star anise)).